Consider the following 215-residue polypeptide: Na(+)-translocating NADH-quinone reductase subunit D (215 aa).

The next 6 helical transmembrane spans lie at 14–34, 42–62, 72–92, 103–123, 131–151, and 178–198; these read PFISNNPIMLQVLGICSALAV, FVMALAVTVVTGFSNLFISLI, IIVQMTIIASLVIVVDQLLKA, VFVGLIITNCIVMGRAEAYAM, FLDGIGNGLGYGFILLLVGTI, and NGMLLMPPSAFFLIGLFIWVL.

Belongs to the NqrDE/RnfAE family. As to quaternary structure, composed of six subunits; NqrA, NqrB, NqrC, NqrD, NqrE and NqrF.

It localises to the cell inner membrane. The catalysed reaction is a ubiquinone + n Na(+)(in) + NADH + H(+) = a ubiquinol + n Na(+)(out) + NAD(+). Functionally, NQR complex catalyzes the reduction of ubiquinone-1 to ubiquinol by two successive reactions, coupled with the transport of Na(+) ions from the cytoplasm to the periplasm. NqrA to NqrE are probably involved in the second step, the conversion of ubisemiquinone to ubiquinol. The chain is Na(+)-translocating NADH-quinone reductase subunit D from Tolumonas auensis (strain DSM 9187 / NBRC 110442 / TA 4).